Here is a 356-residue protein sequence, read N- to C-terminus: Isocitrate dehydrogenase [NAD] subunit 1, mitochondrial (356 aa).

Positions 106, 137, and 224 each coordinate substrate. Aspartate 224 is a binding site for Mg(2+).

Belongs to the isocitrate and isopropylmalate dehydrogenases family. Octamer of two non-identical subunits IDH1 and IDH2. Requires Mg(2+) as cofactor. Mn(2+) serves as cofactor.

The protein localises to the mitochondrion. It catalyses the reaction D-threo-isocitrate + NAD(+) = 2-oxoglutarate + CO2 + NADH. Its function is as follows. Performs an essential role in the oxidative function of the citric acid cycle. Also binds RNA; specifically to the 5'-untranslated leaders of mitochondrial mRNAs. This chain is Isocitrate dehydrogenase [NAD] subunit 1, mitochondrial (idh1), found in Schizosaccharomyces pombe (strain 972 / ATCC 24843) (Fission yeast).